Here is a 21-residue protein sequence, read N- to C-terminus: Complement receptor 3-related protein (21 aa).

The protein resides in the secreted. Plays a role in adherence of C.albicans to buccal epithelial cells, and in biofilm formation. This chain is Complement receptor 3-related protein, found in Candida albicans (Yeast).